The following is a 410-amino-acid chain: Transcription factor Dp-1 (410 aa).

Lysine 3 bears the N6-acetyllysine mark. Serine 23 is subject to Phosphoserine. A compositionally biased stretch (polar residues) spans 73–100; the sequence is SNTLVVGSPHTPSTHFASQNQPSDSSPW. Residues 73 to 116 form a disordered region; that stretch reads SNTLVVGSPHTPSTHFASQNQPSDSSPWSAGKRNRKGEKNGKGL. The span at 104-116 shows a compositional bias: basic residues; that stretch reads KRNRKGEKNGKGL. Positions 105 to 127 are interaction with CEBPA; it reads RNRKGEKNGKGLRHFSMKVCEKV. A DNA-binding region spans residues 113–195; it reads GKGLRHFSMK…KKEIKWIGLP (83 aa). The short motif at 161–195 is the DEF box element; it reads DQKNIRRRVYDALNVLMAMNIISKEKKEIKWIGLP. The interval 204–277 is dimerization; that stretch reads NLEVERQRRL…KKTVIDCSIS (74 aa). The enhances binding of RB protein to E2F stretch occupies residues 211 to 327; sequence RRLERIKQKQ…DLKMARSLVP (117 aa). The tract at residues 214–246 is DCB1; it reads ERIKQKQSQLQELILQQIAFKNLVQRNRHAEQQ. Positions 259–315 are DCB2; it reads LPFIIVNTSKKTVIDCSISNDKFEYLFNFDNTFEIHDDIEVLKRMGMACGLESGSCS. A disordered region spans residues 370-410; sequence GMLATSSNGSQYSGSRVETPVSYVGEDDEEDDDFNENDEDD. Residues 373–385 show a composition bias toward polar residues; sequence ATSSNGSQYSGSR. Residues 394–410 show a composition bias toward acidic residues; that stretch reads GEDDEEDDDFNENDEDD.

It belongs to the E2F/DP family. In terms of assembly, component of the E2F:DP transcription factor complex. Forms heterodimers with E2F family members. The complex can interact with hypophosphorylated retinoblastoma protein RB1 and related proteins (RBL1 and RBL2) that inhibit the E2F transactivation domain. This repression involves recruitment of histone deacetylase (HDAC). During the cell cycle, from mid-to-late G1 phase, RB family members become phosphorylated, detach from the DRTF1/E2F complex to render E2F transcriptionally active. Viral oncoproteins, notably E1A, T-antigen and HPV E7, are capable of sequestering RB protein, thus releasing the active complex. Part of the E2F6.com-1 complex in G0 phase is composed of E2F6, MGA, MAX, TFDP1, CBX3, BAT8, EUHMTASE1, RING1, RNF2, MBLR, L3MBTL2 YAF2. Component of the DREAM complex (also named LINC complex) at least composed of E2F4, E2F5, LIN9, LIN37, LIN52, LIN54, MYBL1, MYBL2, RBL1, RBL2, RBBP4, TFDP1 and TFDP2. The complex exists in quiescent cells where it represses cell cycle-dependent genes. It dissociates in S phase when LIN9, LIN37, LIN52 and LIN54 form a subcomplex that binds to MYBL2. The complex TFDP1:E2F1 interacts with CEBPA; the interaction prevents CEBPA binding to target gene promoters and represses its transcriptional activity. Post-translationally, phosphorylation by E2F1-bound cyclin A-CDK2, in the S phase, inhibits E2F-mediated DNA binding and transactivation. In terms of processing, ubiquitinated by the BCR(KBTBD5) complex, leading to its subsequent degradation. Highest levels in muscle. Also expressed in brain, placenta, liver and kidney. Lower levels in lung and pancreas. Not detected in heart.

It localises to the nucleus. It is found in the cytoplasm. Its function is as follows. Can stimulate E2F-dependent transcription. Binds DNA cooperatively with E2F family members through the E2 recognition site, 5'-TTTC[CG]CGC-3', found in the promoter region of a number of genes whose products are involved in cell cycle regulation or in DNA replication. The E2F1:DP complex appears to mediate both cell proliferation and apoptosis. Blocks adipocyte differentiation by repressing CEBPA binding to its target gene promoters. The sequence is that of Transcription factor Dp-1 (TFDP1) from Homo sapiens (Human).